We begin with the raw amino-acid sequence, 70 residues long: Small ribosomal subunit protein bS21 (70 aa).

Belongs to the bacterial ribosomal protein bS21 family.

This chain is Small ribosomal subunit protein bS21, found in Laribacter hongkongensis (strain HLHK9).